A 341-amino-acid polypeptide reads, in one-letter code: Probable long-chain-alcohol O-fatty-acyltransferase 1 (341 aa).

8 helical membrane-spanning segments follow: residues 7–27 (NLIEVWISALISLSYCYYISS), 36–56 (LLSILPVCILFLVLPLFLSCV), 58–78 (FCAISVLFLSWLANFKLLLFA), 120–140 (PMPKWVLAVKILVLGVLLHVY), 149–169 (FVVLALYCLHIYLEVELVLVF), 233–253 (MFAGVMASFFVSGLMHELLYF), 261–281 (TWEVTCFFVLHGAATATEIAV), and 293–313 (AVSGLVVLTFVSVTGVWLFLA).

This sequence belongs to the wax synthase family.

It localises to the membrane. The catalysed reaction is a long chain fatty alcohol + a fatty acyl-CoA = a wax ester + CoA. Catalyzes the final step in the synthesis of long-chain linear esters (waxes). This chain is Probable long-chain-alcohol O-fatty-acyltransferase 1 (AT1), found in Arabidopsis thaliana (Mouse-ear cress).